A 308-amino-acid chain; its full sequence is ADP,ATP carrier protein (308 aa).

3 Solcar repeats span residues 6–99 (KNFM…FKRM), 110–203 (KWFA…LKPV), and 211–297 (NNFL…LQVI). 5 helical membrane-spanning segments follow: residues 8–35 (FMVD…VKLL), 76–100 (TANV…KRMF), 108–128 (YWKW…VSLS), 179–200 (FNIS…YDSL), and 214–234 (LAAF…SYPI). 2 residues coordinate ADP: R81 and K93. R238 is a binding site for ADP. The interval 238 to 243 (RRRMMM) is important for transport activity. The Nucleotide carrier signature motif motif lies at 238-243 (RRRMMM). Residues 274–294 (AGANILRAVAGAGVLAGYDQL) traverse the membrane as a helical segment.

It belongs to the mitochondrial carrier (TC 2.A.29) family. As to quaternary structure, monomer.

Its subcellular location is the mitochondrion inner membrane. It carries out the reaction ADP(in) + ATP(out) = ADP(out) + ATP(in). With respect to regulation, the matrix-open state (m-state) is inhibited by the membrane-permeable bongkrekic acid (BKA). The cytoplasmic-open state (c-state) is inhibited by the membrane-impermeable toxic inhibitor carboxyatractyloside (CATR). ADP:ATP antiporter that mediates import of ADP into the mitochondrial matrix for ATP synthesis, and export of ATP out to fuel the cell. Cycles between the cytoplasmic-open state (c-state) and the matrix-open state (m-state): operates by the alternating access mechanism with a single substrate-binding site intermittently exposed to either the cytosolic (c-state) or matrix (m-state) side of the inner mitochondrial membrane. The sequence is that of ADP,ATP carrier protein (ABT) from Chlamydomonas reinhardtii (Chlamydomonas smithii).